The following is a 215-amino-acid chain: Ribosomal RNA small subunit methyltransferase G (215 aa).

S-adenosyl-L-methionine is bound by residues Gly-77, Phe-82, 130-131, and Arg-146; that span reads IE.

Belongs to the methyltransferase superfamily. RNA methyltransferase RsmG family.

The protein resides in the cytoplasm. It catalyses the reaction guanosine(527) in 16S rRNA + S-adenosyl-L-methionine = N(7)-methylguanosine(527) in 16S rRNA + S-adenosyl-L-homocysteine. In terms of biological role, specifically methylates the N7 position of guanine in position 527 of 16S rRNA. The sequence is that of Ribosomal RNA small subunit methyltransferase G from Bartonella henselae (strain ATCC 49882 / DSM 28221 / CCUG 30454 / Houston 1) (Rochalimaea henselae).